The chain runs to 128 residues: Large ribosomal subunit protein bL12 (128 aa).

The protein belongs to the bacterial ribosomal protein bL12 family. In terms of assembly, homodimer. Part of the ribosomal stalk of the 50S ribosomal subunit. Forms a multimeric L10(L12)X complex, where L10 forms an elongated spine to which 2 to 4 L12 dimers bind in a sequential fashion. Binds GTP-bound translation factors.

Forms part of the ribosomal stalk which helps the ribosome interact with GTP-bound translation factors. Is thus essential for accurate translation. This Phenylobacterium zucineum (strain HLK1) protein is Large ribosomal subunit protein bL12.